We begin with the raw amino-acid sequence, 238 residues long: Ribonuclease PH (238 aa).

Residues arginine 86 and 124–126 (GTR) each bind phosphate.

The protein belongs to the RNase PH family. Homohexameric ring arranged as a trimer of dimers.

The enzyme catalyses tRNA(n+1) + phosphate = tRNA(n) + a ribonucleoside 5'-diphosphate. Functionally, phosphorolytic 3'-5' exoribonuclease that plays an important role in tRNA 3'-end maturation. Removes nucleotide residues following the 3'-CCA terminus of tRNAs; can also add nucleotides to the ends of RNA molecules by using nucleoside diphosphates as substrates, but this may not be physiologically important. Probably plays a role in initiation of 16S rRNA degradation (leading to ribosome degradation) during starvation. The protein is Ribonuclease PH of Proteus mirabilis (strain HI4320).